The chain runs to 493 residues: MSKRAKKRDKLMVEIVQVYSASRDEEQVTDLKKTDYLPYLFNLVMPKQFYKSPNRIVMARLYPDVQKHDEQAAEYFEGFQTPCFDLPTNLFPEKAPIDKIVFMPKVMLPMGFEAGGVFGPGVLPRRCYPVDLISPDHKGPMPPLFVGLRGMNVSLSSMINTFLGMYDSSDGQEPHVYEMHATNHHYKNDLAPEELMLRPDFTLSVAYTLPASMCLPSPYPYPSVPAQDNIYTPDLSKVLILMPHQFNITVAILSTVNNPHDPSVAFATMGDDEDCPEFELPSDVFPICEGVNRPIFLPKRFMPKGFDACCVFKPGSLSELWYIKSIGRFGNPQDQYNCFITPPLFVGKYTRNAASINMLEEISVHFDQKDREIAKSLARLRLDALRLNSRNNTTKGFLVMESDKPTTPAGAYSVESYEKASEDGCIAKVTQECATKSTDTRDDGMNTADYQSQFPELEQDSEPEPEPEPEPQTEDEGEDEDIEILASLCSGSI.

A disordered region spans residues 434 to 493; that stretch reads ATKSTDTRDDGMNTADYQSQFPELEQDSEPEPEPEPEPQTEDEGEDEDIEILASLCSGSI. Residues 457–483 are compositionally biased toward acidic residues; sequence LEQDSEPEPEPEPEPQTEDEGEDEDIE.

This sequence belongs to the DM7 family.

The polypeptide is DM7 family protein GM11958 (Drosophila sechellia (Fruit fly)).